A 266-amino-acid polypeptide reads, in one-letter code: Thymidylate synthase (266 aa).

A dUMP-binding site is contributed by Arg-24. Residue His-54 coordinates (6R)-5,10-methylene-5,6,7,8-tetrahydrofolate. 129-130 is a dUMP binding site; that stretch reads RR. Catalysis depends on Cys-149, which acts as the Nucleophile. DUMP-binding positions include 169–172, Asn-180, and 210–212; these read RSAD and HIY. Asp-172 is a (6R)-5,10-methylene-5,6,7,8-tetrahydrofolate binding site. Ala-265 provides a ligand contact to (6R)-5,10-methylene-5,6,7,8-tetrahydrofolate.

The protein belongs to the thymidylate synthase family. Bacterial-type ThyA subfamily. In terms of assembly, homodimer.

It localises to the cytoplasm. It carries out the reaction dUMP + (6R)-5,10-methylene-5,6,7,8-tetrahydrofolate = 7,8-dihydrofolate + dTMP. Its pathway is pyrimidine metabolism; dTTP biosynthesis. Catalyzes the reductive methylation of 2'-deoxyuridine-5'-monophosphate (dUMP) to 2'-deoxythymidine-5'-monophosphate (dTMP) while utilizing 5,10-methylenetetrahydrofolate (mTHF) as the methyl donor and reductant in the reaction, yielding dihydrofolate (DHF) as a by-product. This enzymatic reaction provides an intracellular de novo source of dTMP, an essential precursor for DNA biosynthesis. This is Thymidylate synthase from Mycobacterium ulcerans (strain Agy99).